A 117-amino-acid chain; its full sequence is Large ribosomal subunit protein uL18 (117 aa).

Belongs to the universal ribosomal protein uL18 family. In terms of assembly, part of the 50S ribosomal subunit; part of the 5S rRNA/L5/L18/L25 subcomplex. Contacts the 5S and 23S rRNAs.

In terms of biological role, this is one of the proteins that bind and probably mediate the attachment of the 5S RNA into the large ribosomal subunit, where it forms part of the central protuberance. The polypeptide is Large ribosomal subunit protein uL18 (Enterobacter sp. (strain 638)).